Reading from the N-terminus, the 140-residue chain is MKMFKSLSLIPRIVSPFQKCYSTDLINLVGVPRVKITKGQNRYLLVNIHTHGFTKYGRVIVRGADVDNHLAIFDSILEELEPEGICAKILGGGRILNEPDNKKIKIYGTSRTFGGADHTRTRNILQAWTTYKDFKITVKQ.

Arg42 serves as a coordination point for substrate. His69 serves as the catalytic Proton acceptor. 110 to 112 contributes to the substrate binding site; it reads SRT.

It belongs to the janus family.

JanA and janB regulate somatic sex differentiation. The polypeptide is Sex-regulated protein janus-B (janB) (Drosophila simulans (Fruit fly)).